A 501-amino-acid polypeptide reads, in one-letter code: ATP synthase subunit alpha (501 aa).

169 to 176 (GDRQTGKT) is an ATP binding site.

Belongs to the ATPase alpha/beta chains family. As to quaternary structure, F-type ATPases have 2 components, CF(1) - the catalytic core - and CF(0) - the membrane proton channel. CF(1) has five subunits: alpha(3), beta(3), gamma(1), delta(1), epsilon(1). CF(0) has three main subunits: a(1), b(2) and c(9-12). The alpha and beta chains form an alternating ring which encloses part of the gamma chain. CF(1) is attached to CF(0) by a central stalk formed by the gamma and epsilon chains, while a peripheral stalk is formed by the delta and b chains.

The protein resides in the cell membrane. It carries out the reaction ATP + H2O + 4 H(+)(in) = ADP + phosphate + 5 H(+)(out). In terms of biological role, produces ATP from ADP in the presence of a proton gradient across the membrane. The alpha chain is a regulatory subunit. The sequence is that of ATP synthase subunit alpha from Streptococcus pneumoniae serotype 19F (strain G54).